The following is a 202-amino-acid chain: N-(5'-phosphoribosyl)anthranilate isomerase (202 aa).

The protein belongs to the TrpF family.

It carries out the reaction N-(5-phospho-beta-D-ribosyl)anthranilate = 1-(2-carboxyphenylamino)-1-deoxy-D-ribulose 5-phosphate. Its pathway is amino-acid biosynthesis; L-tryptophan biosynthesis; L-tryptophan from chorismate: step 3/5. This is N-(5'-phosphoribosyl)anthranilate isomerase from Listeria monocytogenes serovar 1/2a (strain ATCC BAA-679 / EGD-e).